Consider the following 485-residue polypeptide: Glycogen synthase (485 aa).

Residue K17 participates in ADP-alpha-D-glucose binding.

It belongs to the glycosyltransferase 1 family. Bacterial/plant glycogen synthase subfamily.

The enzyme catalyses [(1-&gt;4)-alpha-D-glucosyl](n) + ADP-alpha-D-glucose = [(1-&gt;4)-alpha-D-glucosyl](n+1) + ADP + H(+). The protein operates within glycan biosynthesis; glycogen biosynthesis. In terms of biological role, synthesizes alpha-1,4-glucan chains using ADP-glucose. This Novosphingobium aromaticivorans (strain ATCC 700278 / DSM 12444 / CCUG 56034 / CIP 105152 / NBRC 16084 / F199) protein is Glycogen synthase.